Consider the following 125-residue polypeptide: uncharacterized protein (125 aa).

Its subcellular location is the mitochondrion. This is an uncharacterized protein from Paramecium tetraurelia.